We begin with the raw amino-acid sequence, 355 residues long: Methionine import ATP-binding protein MetN (355 aa).

The region spanning 8-250 (LKNIDITFTQ…PQEDLTQEFI (243 aa)) is the ABC transporter domain. 42-49 (GYSGAGKS) serves as a coordination point for ATP.

Belongs to the ABC transporter superfamily. Methionine importer (TC 3.A.1.24) family. In terms of assembly, the complex is composed of two ATP-binding proteins (MetN), two transmembrane proteins (MetI) and a solute-binding protein (MetQ).

It is found in the cell membrane. It catalyses the reaction L-methionine(out) + ATP + H2O = L-methionine(in) + ADP + phosphate + H(+). It carries out the reaction D-methionine(out) + ATP + H2O = D-methionine(in) + ADP + phosphate + H(+). Its function is as follows. Part of the ABC transporter complex MetNIQ involved in methionine import. Responsible for energy coupling to the transport system. This chain is Methionine import ATP-binding protein MetN, found in Streptococcus thermophilus (strain CNRZ 1066).